We begin with the raw amino-acid sequence, 623 residues long: Glutathione import ATP-binding protein GsiA (623 aa).

ABC transporter domains follow at residues 15–269 (VENL…RALL) and 314–564 (LRVR…RKLL). ATP is bound by residues 49 to 56 (GESGSGKS) and 357 to 364 (GESGSGKS).

Belongs to the ABC transporter superfamily. Glutathione importer (TC 3.A.1.5.11) family. In terms of assembly, the complex is composed of two ATP-binding proteins (GsiA), two transmembrane proteins (GsiC and GsiD) and a solute-binding protein (GsiB).

Its subcellular location is the cell inner membrane. The catalysed reaction is glutathione(out) + ATP + H2O = glutathione(in) + ADP + phosphate + H(+). Part of the ABC transporter complex GsiABCD involved in glutathione import. Responsible for energy coupling to the transport system. This Escherichia coli O157:H7 protein is Glutathione import ATP-binding protein GsiA.